A 1511-amino-acid polypeptide reads, in one-letter code: Pleiotropic ABC efflux transporter of multiple drugs (1511 aa).

Polar residues predominate over residues 1 to 14 (MPEAKLNNNVNDVT). The segment at 1–32 (MPEAKLNNNVNDVTSYSSASSSTENAADLHNY) is disordered. The Cytoplasmic segment spans residues 1–517 (MPEAKLNNNV…LLIRNMWRLR (517 aa)). A Phosphoserine modification is found at serine 22. Phosphothreonine is present on residues threonine 49 and threonine 51. The disordered stretch occupies residues 52-71 (AQSMQNSTQSAPNKSDAQSI). Residues serine 54, serine 58, and serine 61 each carry the phosphoserine modification. An ABC transporter 1 domain is found at 161–410 (LRKFQRSKET…FEDMGYVCPS (250 aa)). Residues 518–542 (NNIGFTLFMILGNCSMALILGSMFF) traverse the membrane as a helical segment. At 543–558 (KIMKKGDTSTFYFRGS) the chain is on the extracellular side. Residues 559–579 (AMFFAILFNAFSSLLEIFSLY) traverse the membrane as a helical segment. Topologically, residues 580–611 (EARPITEKHRTYSLYHPSADAFASVLSEIPSK) are cytoplasmic. Residues 612–628 (LIIAVCFNIIFYFLVDF) form a helical membrane-spanning segment. Residues 629–631 (RRN) lie on the Extracellular side of the membrane. A helical membrane pass occupies residues 632-650 (GGVFFFYLLINIVAVFSMS). Residues 651–665 (HLFRCVGSLTKTLSE) lie on the Cytoplasmic side of the membrane. The helical transmembrane segment at 666–685 (AMVPASMLLLALSMYTGFAI) threads the bilayer. Topologically, residues 686 to 774 (PKKKILRWSK…QYYHKDKWRG (89 aa)) are extracellular. Asparagine 734 carries N-linked (GlcNAc...) asparagine glycosylation. A helical transmembrane segment spans residues 775–793 (FGIGMAYVVFFFFVYLFLC). The Cytoplasmic portion of the chain corresponds to 794 to 1237 (EYNEGAKQKG…GTSLQGLQNQ (444 aa)). Residues 824 to 858 (EKNANDPENVGERSDLSSDRKMLQESSEEESDTYG) form a disordered region. Lysine 825 is covalently cross-linked (Glycyl lysine isopeptide (Lys-Gly) (interchain with G-Cter in ubiquitin)). Residues 833–846 (VGERSDLSSDRKML) are compositionally biased toward basic and acidic residues. A phosphoserine mark is found at serine 837, serine 840, serine 841, serine 849, serine 850, and serine 854. Residues 869-1112 (FHWRNLCYEV…MIDYFESHGA (244 aa)) enclose the ABC transporter 2 domain. 905–912 (GASGAGKT) provides a ligand contact to ATP. The helical transmembrane segment at 1238 to 1260 (MLAVFMFTVIFNPILQQYLPSFV) threads the bilayer. The Extracellular segment spans residues 1261–1291 (QQRDLYEARERPSRTFSWISFIFAQIFVEVP). A helical transmembrane segment spans residues 1292–1313 (WNILAGTIAYFIYYYPIGFYSN). At 1314 to 1324 (ASAAGQLHERG) the chain is on the cytoplasmic side. Residues 1325-1349 (ALFWLFSCAFYVYVGSMGLLVISFN) form a helical membrane-spanning segment. The Extracellular portion of the chain corresponds to 1350–1354 (QVAES). Residues 1355–1379 (AANLASLLFTMSLSFCGVMTTPSAM) form a helical membrane-spanning segment. Residues 1380–1388 (PRFWIFMYR) lie on the Cytoplasmic side of the membrane. The chain crosses the membrane as a helical span at residues 1389–1407 (VSPLTYFIQALLAVGVANV). At 1408-1476 (DVKCADYELL…VNSFYSERWR (69 aa)) the chain is on the extracellular side. Residue asparagine 1447 is glycosylated (N-linked (GlcNAc...) asparagine). Residues 1477–1499 (NYGIFICYIAFNYIAGVFFYWLA) form a helical membrane-spanning segment. Topologically, residues 1500–1511 (RVPKKNGKLSKK) are cytoplasmic.

It belongs to the ABC transporter superfamily. ABCG family. PDR (TC 3.A.1.205) subfamily. Ubiquitinylation mediates endocytosis and vacuolar degradation. Phosphorylation by casein kinase I stabilizes the protein half-life.

It localises to the cell membrane. FK506, isonitrile, enniatin, RU49953, kitasatospora E420, staurosporine CGP42700, prenyl-flavonoids, D-octapeptides were found to be inhibitors in vivo. Vanadate and oligomycin were found to be inhibitors in vitro. In terms of biological role, active efflux of weakly charged organic compounds of 90 cubic Angstroms to 300 cubic Angstroms surface volume. Confers resistance to numerous chemicals including cycloheximide, sulfomethuron methyl, steroids, antiseptics, antibiotics, anticancer, herbicides, mycotoxins, insecticides, ionophores, alkaloids, flavonoids, phenothiazines, organotin compounds, carbazoles, lysosomotropic aminoesters, detergents, rhodamines and other fluorophores, azoles and other antifungals. Exhibits nucleoside triphosphatase activity. This Saccharomyces cerevisiae (strain ATCC 204508 / S288c) (Baker's yeast) protein is Pleiotropic ABC efflux transporter of multiple drugs (PDR5).